The sequence spans 121 residues: Large ribosomal subunit protein bL12 (121 aa).

The protein belongs to the bacterial ribosomal protein bL12 family. Homodimer. Part of the ribosomal stalk of the 50S ribosomal subunit. Forms a multimeric L10(L12)X complex, where L10 forms an elongated spine to which 2 to 4 L12 dimers bind in a sequential fashion. Binds GTP-bound translation factors.

In terms of biological role, forms part of the ribosomal stalk which helps the ribosome interact with GTP-bound translation factors. Is thus essential for accurate translation. In Macrococcus caseolyticus (strain JCSC5402) (Macrococcoides caseolyticum), this protein is Large ribosomal subunit protein bL12.